Here is a 528-residue protein sequence, read N- to C-terminus: uncharacterized protein (528 aa).

2 stretches are compositionally biased toward basic residues: residues methionine 1 to leucine 16 and glutamine 25 to lysine 43. The tract at residues methionine 1 to aspartate 59 is disordered.

Belongs to the NOC2 family.

Its subcellular location is the nucleus. It localises to the nucleolus. This is an uncharacterized protein from Schizosaccharomyces pombe (strain 972 / ATCC 24843) (Fission yeast).